Consider the following 352-residue polypeptide: tRNA pseudouridine synthase D (352 aa).

Aspartate 81 serves as the catalytic Nucleophile. The TRUD domain occupies 157 to 303 (GVPNYFGLQR…MLHERRILRL (147 aa)).

The protein belongs to the pseudouridine synthase TruD family.

The catalysed reaction is uridine(13) in tRNA = pseudouridine(13) in tRNA. Functionally, responsible for synthesis of pseudouridine from uracil-13 in transfer RNAs. The chain is tRNA pseudouridine synthase D from Azotobacter vinelandii (strain DJ / ATCC BAA-1303).